A 64-amino-acid chain; its full sequence is Large ribosomal subunit protein bL32 (64 aa).

Residues 1–35 (MAVQKSRVTPSRRGMRRAHDALSAKQLSTDPTTGE) are disordered.

This sequence belongs to the bacterial ribosomal protein bL32 family.

This is Large ribosomal subunit protein bL32 from Stenotrophomonas maltophilia (strain R551-3).